Consider the following 238-residue polypeptide: Uracil-DNA glycosylase (238 aa).

Asp81 serves as the catalytic Proton acceptor.

This sequence belongs to the uracil-DNA glycosylase (UDG) superfamily. UNG family.

Its subcellular location is the cytoplasm. The enzyme catalyses Hydrolyzes single-stranded DNA or mismatched double-stranded DNA and polynucleotides, releasing free uracil.. In terms of biological role, excises uracil residues from the DNA which can arise as a result of misincorporation of dUMP residues by DNA polymerase or due to deamination of cytosine. This chain is Uracil-DNA glycosylase, found in Corynebacterium efficiens (strain DSM 44549 / YS-314 / AJ 12310 / JCM 11189 / NBRC 100395).